The primary structure comprises 142 residues: Chorion class A protein Ld19 (142 aa).

The signal sequence occupies residues 1–18 (MNSFALLLVCIQACLVQS).

The protein belongs to the chorion protein family.

In terms of biological role, this protein is one of many from the eggshell of the gypsy moth. The sequence is that of Chorion class A protein Ld19 from Lymantria dispar (Gypsy moth).